The primary structure comprises 210 residues: CKLF-like MARVEL transmembrane domain-containing protein 2B (210 aa).

The next 4 helical transmembrane spans lie at 35-55, 65-85, 103-123, and 127-147; these read FWAQ…IAAM, PIVI…FFLY, LMND…ALEA, and LPVP…ISII. Positions 35-157 constitute an MARVEL domain; the sequence is FWAQGHAECK…DLCLQRRQFK (123 aa).

It belongs to the chemokine-like factor family.

It localises to the membrane. The protein is CKLF-like MARVEL transmembrane domain-containing protein 2B (Cmtm2b) of Mus musculus (Mouse).